The primary structure comprises 372 residues: GTPase Obg (372 aa).

The region spanning 1–159 (MKFVDEATIE…RRLRLELKVL (159 aa)) is the Obg domain. Residues 160-336 (ADVGLLGLPN…LIWALQDYLD (177 aa)) enclose the OBG-type G domain. GTP is bound by residues 166–173 (GLPNAGKS), 191–195 (FTTLH), 213–216 (DIPG), 288–291 (NKLD), and 317–319 (SGL). Positions 173 and 193 each coordinate Mg(2+). The segment at 341–372 (KEQITQDKADGSYVHEDPRFDTTRDAPPSGKD) is disordered.

Belongs to the TRAFAC class OBG-HflX-like GTPase superfamily. OBG GTPase family. Monomer. It depends on Mg(2+) as a cofactor.

Its subcellular location is the cytoplasm. An essential GTPase which binds GTP, GDP and possibly (p)ppGpp with moderate affinity, with high nucleotide exchange rates and a fairly low GTP hydrolysis rate. Plays a role in control of the cell cycle, stress response, ribosome biogenesis and in those bacteria that undergo differentiation, in morphogenesis control. This is GTPase Obg from Bordetella avium (strain 197N).